Reading from the N-terminus, the 275-residue chain is 2,3,4,5-tetrahydropyridine-2,6-dicarboxylate N-succinyltransferase (275 aa).

R108 and D145 together coordinate substrate.

The protein belongs to the transferase hexapeptide repeat family. In terms of assembly, homotrimer.

The protein localises to the cytoplasm. It carries out the reaction (S)-2,3,4,5-tetrahydrodipicolinate + succinyl-CoA + H2O = (S)-2-succinylamino-6-oxoheptanedioate + CoA. The protein operates within amino-acid biosynthesis; L-lysine biosynthesis via DAP pathway; LL-2,6-diaminopimelate from (S)-tetrahydrodipicolinate (succinylase route): step 1/3. The sequence is that of 2,3,4,5-tetrahydropyridine-2,6-dicarboxylate N-succinyltransferase from Ruegeria pomeroyi (strain ATCC 700808 / DSM 15171 / DSS-3) (Silicibacter pomeroyi).